Reading from the N-terminus, the 249-residue chain is Tabinhibitin 4 (249 aa).

The N-terminal stretch at 1–23 (MTLNVYFVLLSPYSLQSVPLPLT) is a signal peptide. The Cell attachment site signature appears at 31–33 (RGD). An SCP domain is found at 64-207 (LQKTNWLRGV…LKRALFTCNF (144 aa)). The short motif at 220-222 (RGD) is the Cell attachment site element.

It belongs to the CRISP family. Expressed in salivary glands.

It is found in the secreted. In terms of biological role, inhibits platelet aggregation induced by all agonists tested (ADP, arachidonic acid, the thromboxane A2 analog U46619, thrombin, and snake venom snaclecs (TMVA that activates platelet through GPIB, and stejnulxin that specifically acts through GPVI (GP6))). May act by competing with fibrinogen for binding to glycoprotein IIb/IIIa (ITGA2B/ITGB3). This Tabanus yao (Horsefly) protein is Tabinhibitin 4.